The sequence spans 199 residues: uncharacterized protein (199 aa).

This sequence to M.jannaschii MJ1356.

This is an uncharacterized protein from Methanocaldococcus jannaschii (strain ATCC 43067 / DSM 2661 / JAL-1 / JCM 10045 / NBRC 100440) (Methanococcus jannaschii).